A 595-amino-acid chain; its full sequence is Estrogen receptor (595 aa).

Residues 1-184 (MTMTLHTKAS…AMESAKETRY (184 aa)) form a modulating (transactivation AF-1); mediates interaction with MACROD1 region. An O-linked (GlcNAc) serine glycan is attached at Ser-10. The required for interaction with NCOA1 stretch occupies residues 35-47 (LERPLGEVYVDSS). The interval 35 to 174 (LERPLGEVYV…LASTSDKGSM (140 aa)) is interaction with DDX5; self-association. Ser-104 and Ser-106 each carry phosphoserine; by CDK2. A Phosphoserine modification is found at Ser-118. The disordered stretch occupies residues 144 to 174 (AGPPAFYRPNSDNRRQGGRERLASTSDKGSM). Residues 154-165 (SDNRRQGGRERL) are compositionally biased toward basic and acidic residues. Phosphoserine; by CK2 is present on Ser-167. 2 NR C4-type zinc fingers span residues 185–205 (CAVCNDYASGYHYGVWSCEGC) and 221–245 (CPATNQCTIDKNRRKSCQACRLRKC). The segment at residues 185 to 250 (CAVCNDYASG…RLRKCYEVGM (66 aa)) is a DNA-binding region (nuclear receptor). The interval 185–310 (CAVCNDYASG…TKKNSPVLSL (126 aa)) is mediates interaction with DNTTIP2. Positions 251–310 (MKGGIRKDRRGGRMLKHKRQRDDGEGRNEAVPPGDMRSANLWPSPLLIKHTKKNSPVLSL) are hinge. A compositionally biased stretch (basic residues) spans 257-269 (KDRRGGRMLKHKR). The tract at residues 257-288 (KDRRGGRMLKHKRQRDDGEGRNEAVPPGDMRS) is disordered. Residue Arg-260 is modified to Asymmetric dimethylarginine; by PRMT1. The interval 262-595 (GRMLKHKRQR…GEAENFPTTI (334 aa)) is interaction with AKAP13. Positions 264–594 (MLKHKRQRDD…TGEAENFPTT (331 aa)) are self-association. Residues 311 to 547 (TADQMISALL…DLLLEMLDAH (237 aa)) enclose the NR LBD domain. The segment at 311–594 (TADQMISALL…TGEAENFPTT (284 aa)) is transactivation AF-2. Residues Glu-353 and Arg-394 each coordinate 17beta-estradiol. Residue Cys-447 is the site of S-palmitoyl cysteine attachment. Position 524 (His-524) interacts with 17beta-estradiol. Tyr-537 bears the Phosphotyrosine; by Tyr-kinases mark. The interval 551-575 (APTNLGGPPPEDMSQSQLATSGSTP) is disordered. The segment covering 563–575 (MSQSQLATSGSTP) has biased composition (polar residues).

The protein belongs to the nuclear hormone receptor family. NR3 subfamily. In terms of assembly, binds DNA as a homodimer. Can form a heterodimer with ESR2. Interacts with coactivator NCOA5. Interacts with PELP1, the interaction is enhanced by 17-beta-estradiol; the interaction increases ESR1 transcriptional activity. Interacts with NCOA7; the interaction is ligand-inducible. Interacts with AKAP13, CUEDC2, HEXIM1, KDM5A, MAP1S, SMARD1, and UBE1C. Interacts with MUC1; the interaction is stimulated by 7 beta-estradiol (E2) and enhances ESR1-mediated transcription. Interacts with DNTTIP2, and UIMC1. Interacts with KMT2D/MLL2. Interacts with ATAD2; the interaction is enhanced by estradiol. Interacts with KIF18A and LDB1. Interacts with RLIM (via its C-terminus). Interacts with MACROD1. Interacts with SH2D4A and PLCG. Interacts with SH2D4A; the interaction blocks binding to PLCG and inhibits estrogen-induced cell proliferation. Interacts with DYNLL1. Interacts with CCDC62; the interaction requires estradiol and appears to enhance the transcription of target genes. Interacts with NR2C1; the interaction prevents homodimerization of ESR1 and suppresses its transcriptional activity and cell growth. Interacts with DNAAF4. Interacts with PRMT2. Interacts with RBFOX2. Interacts with EP300; the interaction is estrogen-dependent and enhanced by CITED1. Interacts with CITED1; the interaction is estrogen-dependent. Interacts with FAM120B, FOXL2, PHB2 and SLC30A9. Interacts with coactivators NCOA3 and NCOA6. Interacts with STK3/MST2 only in the presence of SAV1 and vice-versa. Binds to CSNK1D. Interacts with NCOA2; NCOA2 can interact with ESR1 AF-1 and AF-2 domains simultaneously and mediate their transcriptional synergy. Interacts with DDX5. Interacts with NCOA1; the interaction seems to require a self-association of N-terminal and C-terminal regions. Interacts with ZNF366, DDX17, NFKB1, RELA, SP1 and SP3. Interacts with NRIP1. Interacts with GPER1; the interaction occurs in an estrogen-dependent manner. Interacts with CLOCK and the interaction is stimulated by estrogen. Interacts with TRIP4 (ufmylated); estrogen dependent. Interacts with LMTK3; the interaction phosphorylates ESR1 (in vitro) and protects it against proteasomal degradation. Interacts with CCAR2 (via N-terminus) in a ligand-independent manner. Interacts with ZFHX3. Interacts with SFR1 in a ligand-dependent and -independent manner. Interacts with DCAF13, LATS1 and DCAF1; regulates ESR1 ubiquitination and ubiquitin-mediated proteasomal degradation. Interacts (via DNA-binding domain) with POU4F2 (C-terminus); this interaction increases the estrogen receptor ESR1 transcriptional activity in a DNA- and ligand 17-beta-estradiol-independent manner. Interacts with ESRRB isoform 1. Interacts with UBE3A and WBP2. Interacts with GTF2B. Interacts with RBM39. In the absence of hormonal ligand, interacts with TACC1. Interacts with PI3KR1 or PI3KR2 and PTK2/FAK1. Interacts with SRC. Interacts with BAG1; the interaction is promoted in the absence of estradiol (17-beta-estradiol/E2). Interacts with and ubiquitinated by STUB1; the interaction is promoted in the absence of estradiol (17-beta-estradiol/E2). Interacts with NEDD8. In terms of processing, phosphorylated by cyclin A/CDK2 and CK1. Phosphorylation probably enhances transcriptional activity. Dephosphorylation at Ser-118 by PPP5C inhibits its transactivation activity. Phosphorylated by LMTK3 (in vitro). Post-translationally, ubiquitinated; regulated by LATS1 via DCAF1 it leads to ESR1 proteasomal degradation. Deubiquitinated by OTUB1. Ubiquitinated by STUB1/CHIP; in the CA1 hippocampal region following loss of endogenous circulating estradiol (17-beta-estradiol/E2). Ubiquitinated by UBR5, leading to its degradation: UBR5 specifically recognizes and binds ligand-bound ESR1 when it is not associated with coactivators (NCOAs). In presence of NCOAs, the UBR5-degron is not accessible, preventing its ubiquitination and degradation. Palmitoylated at Cys-447 by ZDHHC7 and ZDHHC21. Palmitoylation is required for plasma membrane targeting and for rapid intracellular signaling via ERK and AKT kinases and cAMP generation, but not for signaling mediated by the nuclear hormone receptor. In terms of processing, dimethylated by PRMT1 at Arg-260. The methylation may favor cytoplasmic localization. Demethylated by JMJD6 at Arg-260.

It is found in the nucleus. Its subcellular location is the cytoplasm. The protein resides in the golgi apparatus. The protein localises to the cell membrane. Nuclear hormone receptor. The steroid hormones and their receptors are involved in the regulation of eukaryotic gene expression and affect cellular proliferation and differentiation in target tissues. Ligand-dependent nuclear transactivation involves either direct homodimer binding to a palindromic estrogen response element (ERE) sequence or association with other DNA-binding transcription factors, such as AP-1/c-Jun, c-Fos, ATF-2, Sp1 and Sp3, to mediate ERE-independent signaling. Ligand binding induces a conformational change allowing subsequent or combinatorial association with multiprotein coactivator complexes through LXXLL motifs of their respective components. Mutual transrepression occurs between the estrogen receptor (ER) and NF-kappa-B in a cell-type specific manner. Decreases NF-kappa-B DNA-binding activity and inhibits NF-kappa-B-mediated transcription from the IL6 promoter and displace RELA/p65 and associated coregulators from the promoter. Recruited to the NF-kappa-B response element of the CCL2 and IL8 promoters and can displace CREBBP. Present with NF-kappa-B components RELA/p65 and NFKB1/p50 on ERE sequences. Can also act synergistically with NF-kappa-B to activate transcription involving respective recruitment adjacent response elements; the function involves CREBBP. Can activate the transcriptional activity of TFF1. Also mediates membrane-initiated estrogen signaling involving various kinase cascades. Essential for MTA1-mediated transcriptional regulation of BRCA1 and BCAS3. Maintains neuronal survival in response to ischemic reperfusion injury when in the presence of circulating estradiol (17-beta-estradiol/E2). This chain is Estrogen receptor (ESR1), found in Sus scrofa (Pig).